Here is a 370-residue protein sequence, read N- to C-terminus: 4-hydroxy-3-methylbut-2-en-1-yl diphosphate synthase (flavodoxin) (370 aa).

Positions 268, 271, 303, and 310 each coordinate [4Fe-4S] cluster.

This sequence belongs to the IspG family. [4Fe-4S] cluster is required as a cofactor.

It carries out the reaction (2E)-4-hydroxy-3-methylbut-2-enyl diphosphate + oxidized [flavodoxin] + H2O + 2 H(+) = 2-C-methyl-D-erythritol 2,4-cyclic diphosphate + reduced [flavodoxin]. It functions in the pathway isoprenoid biosynthesis; isopentenyl diphosphate biosynthesis via DXP pathway; isopentenyl diphosphate from 1-deoxy-D-xylulose 5-phosphate: step 5/6. Converts 2C-methyl-D-erythritol 2,4-cyclodiphosphate (ME-2,4cPP) into 1-hydroxy-2-methyl-2-(E)-butenyl 4-diphosphate. The protein is 4-hydroxy-3-methylbut-2-en-1-yl diphosphate synthase (flavodoxin) of Bacillus cereus (strain AH187).